A 465-amino-acid chain; its full sequence is Argininosuccinate lyase (465 aa).

Belongs to the lyase 1 family. Argininosuccinate lyase subfamily.

Its subcellular location is the cytoplasm. The catalysed reaction is 2-(N(omega)-L-arginino)succinate = fumarate + L-arginine. It participates in amino-acid biosynthesis; L-arginine biosynthesis; L-arginine from L-ornithine and carbamoyl phosphate: step 3/3. This is Argininosuccinate lyase from Variovorax paradoxus (strain S110).